The following is a 254-amino-acid chain: Triosephosphate isomerase, cytosolic (254 aa).

Asn10 and Lys12 together coordinate substrate. The active-site Electrophile is the His96. Glu166 serves as the catalytic Proton acceptor.

Belongs to the triosephosphate isomerase family. In terms of assembly, homodimer.

The protein resides in the cytoplasm. The enzyme catalyses D-glyceraldehyde 3-phosphate = dihydroxyacetone phosphate. The protein operates within carbohydrate biosynthesis; gluconeogenesis. Its pathway is carbohydrate degradation; glycolysis; D-glyceraldehyde 3-phosphate from glycerone phosphate: step 1/1. The polypeptide is Triosephosphate isomerase, cytosolic (TPIP1) (Petunia hybrida (Petunia)).